The following is a 527-amino-acid chain: MVTMSSPTDSSPSNSFSDFNREEQSRLSDEVRQLKRTNSDLGARNAKLAEMLKSSRDKLSVLFSQLEDMAQPPSVYGTFLETAKDGSNAEIFAGGRRMRVAVSPMLCAADLMPGVQVRLGEGNQVLEACDFEQTGELATLMEMIGRDRALVSDRSGEERVVKLAGPLMDRTAKLPRPGDTLLVDRKAGYAFEAIAKTEISRLALEEAPDVSYQDIGGLDDQIELIQDAVELPFLHPEMYRAYNLHPPKGVLLYGPPGCGKTLIAKAVANSLANRIGETGTSYFINVKGPELLNKYVGETERQIRVIFERARELAGDGRPVIIFFDEMESIFRTRGSGVSSDMETTVVPQLLAELDGVEDLSNVIVVGATNREELIDPAILRPGRLDIKIRINRPNKQGAHDIFTRYINDSIPLAEPAEDLIDRAVDHLYTPRPYVRLTLIDGSVETLNYHDFVSGAMIANIVDRAKKSAIKAHIDGTGVGLTAEQLIQAIDDENQQSEDLPNTSNPDEWSRITGRQGKQVTHAEVVI.

Positions 1-18 (MVTMSSPTDSSPSNSFSD) are enriched in low complexity. The tract at residues 1 to 38 (MVTMSSPTDSSPSNSFSDFNREEQSRLSDEVRQLKRTN) is disordered. Residues 19–33 (FNREEQSRLSDEVRQ) are compositionally biased toward basic and acidic residues. The stretch at 21–53 (REEQSRLSDEVRQLKRTNSDLGARNAKLAEMLK) forms a coiled coil. 257–262 (GCGKTL) serves as a coordination point for ATP. A disordered region spans residues 492–515 (DENQQSEDLPNTSNPDEWSRITGR). Positions 497–507 (SEDLPNTSNPD) are enriched in polar residues.

Belongs to the AAA ATPase family. In terms of assembly, homohexamer. Assembles into a hexameric ring structure.

This is AAA ATPase forming ring-shaped complexes from Corynebacterium glutamicum (strain R).